A 364-amino-acid chain; its full sequence is UDP-N-acetylglucosamine--N-acetylmuramyl-(pentapeptide) pyrophosphoryl-undecaprenol N-acetylglucosamine transferase (364 aa).

Residues 10–12 (TGG), Asn124, Arg166, Ser196, and Gln297 each bind UDP-N-acetyl-alpha-D-glucosamine.

Belongs to the glycosyltransferase 28 family. MurG subfamily.

Its subcellular location is the cell membrane. The enzyme catalyses di-trans,octa-cis-undecaprenyl diphospho-N-acetyl-alpha-D-muramoyl-L-alanyl-D-glutamyl-meso-2,6-diaminopimeloyl-D-alanyl-D-alanine + UDP-N-acetyl-alpha-D-glucosamine = di-trans,octa-cis-undecaprenyl diphospho-[N-acetyl-alpha-D-glucosaminyl-(1-&gt;4)]-N-acetyl-alpha-D-muramoyl-L-alanyl-D-glutamyl-meso-2,6-diaminopimeloyl-D-alanyl-D-alanine + UDP + H(+). Its pathway is cell wall biogenesis; peptidoglycan biosynthesis. In terms of biological role, cell wall formation. Catalyzes the transfer of a GlcNAc subunit on undecaprenyl-pyrophosphoryl-MurNAc-pentapeptide (lipid intermediate I) to form undecaprenyl-pyrophosphoryl-MurNAc-(pentapeptide)GlcNAc (lipid intermediate II). The protein is UDP-N-acetylglucosamine--N-acetylmuramyl-(pentapeptide) pyrophosphoryl-undecaprenol N-acetylglucosamine transferase of Caldanaerobacter subterraneus subsp. tengcongensis (strain DSM 15242 / JCM 11007 / NBRC 100824 / MB4) (Thermoanaerobacter tengcongensis).